We begin with the raw amino-acid sequence, 162 residues long: Cyclic pyranopterin monophosphate synthase (162 aa).

Substrate contacts are provided by residues 75 to 77 (LCH) and 113 to 114 (ME). The active site involves Asp-128.

The protein belongs to the MoaC family. In terms of assembly, homohexamer; trimer of dimers.

It catalyses the reaction (8S)-3',8-cyclo-7,8-dihydroguanosine 5'-triphosphate = cyclic pyranopterin phosphate + diphosphate. The protein operates within cofactor biosynthesis; molybdopterin biosynthesis. Catalyzes the conversion of (8S)-3',8-cyclo-7,8-dihydroguanosine 5'-triphosphate to cyclic pyranopterin monophosphate (cPMP). The chain is Cyclic pyranopterin monophosphate synthase from Burkholderia lata (strain ATCC 17760 / DSM 23089 / LMG 22485 / NCIMB 9086 / R18194 / 383).